The chain runs to 545 residues: MSASWVRGDRTAAWADLSAHFAASAANFDLRTAFAGDARRFERFGVEAPHLFADLSKNWLDAPALALLLRLAREVGLEGRRDAMLAGAPLNNTEGRAVLHTALRAPRDAAPHGSEVHATLDAMLAFAERVRDTAHSGITDVVNIGIGGSDLGPQMAVPALQAYTQAGLRSHFVSNLDGHELAPLLTQLDPQSTLFIIASKTFTTQETMANAETAKAWFLARGGRDIARHFVATTTNVDAAVAFGIDTAFGFWDWVGGRYSLWSAIGLPVAIALGATHFRALLGGAHAMDRHFATAPLERNLPVLLGLLDVWYRNFHGLTSRSVAPYHQGLRRLPAYLQQLEMESNGKCVDRDGEPLPFATSPVVWGEPGTNAQHAYFQMLHQGSDVIPVEFIAVRDTSHAHLDLPPALQPLLAEQQRKLLANCLAQSQALMAGKSEAQALAERAPTAAADMPRDVLARHRSFPGNRPSTTLLLERLDPATLGALIAMYEHRVFTSGAVWGINSFDQWGVELGKAMCSELLPRLTTGDASGLDGSTVGLLRKLGTP.

The active-site Proton donor is the E343. Residues H374 and K513 contribute to the active site.

It belongs to the GPI family.

The protein resides in the cytoplasm. The enzyme catalyses alpha-D-glucose 6-phosphate = beta-D-fructose 6-phosphate. The protein operates within carbohydrate biosynthesis; gluconeogenesis. Its pathway is carbohydrate degradation; glycolysis; D-glyceraldehyde 3-phosphate and glycerone phosphate from D-glucose: step 2/4. Catalyzes the reversible isomerization of glucose-6-phosphate to fructose-6-phosphate. This is Glucose-6-phosphate isomerase from Methylibium petroleiphilum (strain ATCC BAA-1232 / LMG 22953 / PM1).